The sequence spans 543 residues: CTP synthase (543 aa).

Positions 1 to 265 are amidoligase domain; it reads MTRYIFVTGG…DDFVVERFGL (265 aa). Ser-13 contributes to the CTP binding site. Ser-13 lines the UTP pocket. Residues 14 to 19 and Asp-71 contribute to the ATP site; that span reads SLGKGI. The Mg(2+) site is built by Asp-71 and Glu-139. CTP contacts are provided by residues 146-148, 186-191, and Lys-222; these read DIE and KTKPTQ. Residues 186–191 and Lys-222 contribute to the UTP site; that span reads KTKPTQ. The Glutamine amidotransferase type-1 domain maps to 290–541; it reads TIAMVGKYME…VKAALAQHQK (252 aa). Gly-351 serves as a coordination point for L-glutamine. Cys-378 serves as the catalytic Nucleophile; for glutamine hydrolysis. L-glutamine-binding positions include 379–382, Glu-402, and Arg-469; that span reads LGMQ. Active-site residues include His-514 and Glu-516.

The protein belongs to the CTP synthase family. In terms of assembly, homotetramer.

The enzyme catalyses UTP + L-glutamine + ATP + H2O = CTP + L-glutamate + ADP + phosphate + 2 H(+). It catalyses the reaction L-glutamine + H2O = L-glutamate + NH4(+). The catalysed reaction is UTP + NH4(+) + ATP = CTP + ADP + phosphate + 2 H(+). Its pathway is pyrimidine metabolism; CTP biosynthesis via de novo pathway; CTP from UDP: step 2/2. Allosterically activated by GTP, when glutamine is the substrate; GTP has no effect on the reaction when ammonia is the substrate. The allosteric effector GTP functions by stabilizing the protein conformation that binds the tetrahedral intermediate(s) formed during glutamine hydrolysis. Inhibited by the product CTP, via allosteric rather than competitive inhibition. Catalyzes the ATP-dependent amination of UTP to CTP with either L-glutamine or ammonia as the source of nitrogen. Regulates intracellular CTP levels through interactions with the four ribonucleotide triphosphates. This is CTP synthase from Pseudomonas fluorescens (strain Pf0-1).